The chain runs to 212 residues: Phosphatidylserine decarboxylase proenzyme (212 aa).

Serine 182 serves as the catalytic Schiff-base intermediate with substrate; via pyruvic acid. Serine 182 is subject to Pyruvic acid (Ser); by autocatalysis.

The protein belongs to the phosphatidylserine decarboxylase family. PSD-A subfamily. Heterodimer of a large membrane-associated beta subunit and a small pyruvoyl-containing alpha subunit. It depends on pyruvate as a cofactor. Post-translationally, is synthesized initially as an inactive proenzyme. Formation of the active enzyme involves a self-maturation process in which the active site pyruvoyl group is generated from an internal serine residue via an autocatalytic post-translational modification. Two non-identical subunits are generated from the proenzyme in this reaction, and the pyruvate is formed at the N-terminus of the alpha chain, which is derived from the carboxyl end of the proenzyme. The post-translation cleavage follows an unusual pathway, termed non-hydrolytic serinolysis, in which the side chain hydroxyl group of the serine supplies its oxygen atom to form the C-terminus of the beta chain, while the remainder of the serine residue undergoes an oxidative deamination to produce ammonia and the pyruvoyl prosthetic group on the alpha chain.

It is found in the cell membrane. It catalyses the reaction a 1,2-diacyl-sn-glycero-3-phospho-L-serine + H(+) = a 1,2-diacyl-sn-glycero-3-phosphoethanolamine + CO2. It participates in phospholipid metabolism; phosphatidylethanolamine biosynthesis; phosphatidylethanolamine from CDP-diacylglycerol: step 2/2. Functionally, catalyzes the formation of phosphatidylethanolamine (PtdEtn) from phosphatidylserine (PtdSer). This Pelodictyon phaeoclathratiforme (strain DSM 5477 / BU-1) protein is Phosphatidylserine decarboxylase proenzyme.